Consider the following 99-residue polypeptide: UPF0751 protein BCAH820_B0138 (99 aa).

It belongs to the UPF0751 family.

This Bacillus cereus (strain AH820) protein is UPF0751 protein BCAH820_B0138.